The chain runs to 328 residues: Hairy/enhancer-of-split related with YRPW motif-like protein (328 aa).

Positions 1–57 (MKRPKEPSGSDGESDGPIDVGQEGQLSQMARPLSTPSSSQMQARKKHRGIIEKRRRD) are disordered. Residues 24-42 (GQLSQMARPLSTPSSSQMQ) show a composition bias toward polar residues. Residues 42–111 (QARKKHRGII…GGTGFFDARA (70 aa)) form a transcriptional repression and interaction with NCOR1 and SIN3A region. One can recognise a bHLH domain in the interval 43-98 (ARKKHRGIIEKRRRDRINSSLSELRRLVPTAFEKQGSSKLEKAEVLQMTVDHLKML). The Orange domain maps to 116–153 (FRSIGFRECLTEVIRYLGVLEGPSSRADPVRIRLLSHL). The tract at residues 239 to 308 (SRGASSTRRA…NSSSPGPAGR (70 aa)) is disordered. Over residues 261-270 (APSSRAARSS) the composition is skewed to low complexity.

Belongs to the HEY family. Self-associates. Interacts with GATA4, GATA6, HES1, HEY1 and HEY2. Interacts with HDAC1, NCOR1 and SIN3A.

The protein resides in the nucleus. In terms of biological role, downstream effector of Notch signaling which may be required for cardiovascular development. Transcriptional repressor which binds preferentially to the canonical E box sequence 5'-CACGTG-3'. Represses transcription by the cardiac transcriptional activators GATA4 and GATA6. The protein is Hairy/enhancer-of-split related with YRPW motif-like protein (HEYL) of Homo sapiens (Human).